The following is a 65-amino-acid chain: Large ribosomal subunit protein bL33 (65 aa).

Positions 20–42 (APASEKRSPGVSRYTTEKNRRNT) are disordered.

This sequence belongs to the bacterial ribosomal protein bL33 family.

This Prochlorococcus marinus (strain SARG / CCMP1375 / SS120) protein is Large ribosomal subunit protein bL33.